A 101-amino-acid polypeptide reads, in one-letter code: Phosphoribosyl-AMP cyclohydrolase (101 aa).

Position 71 (D71) interacts with Mg(2+). C72 is a Zn(2+) binding site. Residues D73 and D75 each coordinate Mg(2+). Zn(2+) is bound by residues C88 and C95.

Belongs to the PRA-CH family. In terms of assembly, homodimer. Mg(2+) serves as cofactor. Requires Zn(2+) as cofactor.

It is found in the cytoplasm. The catalysed reaction is 1-(5-phospho-beta-D-ribosyl)-5'-AMP + H2O = 1-(5-phospho-beta-D-ribosyl)-5-[(5-phospho-beta-D-ribosylamino)methylideneamino]imidazole-4-carboxamide. Its pathway is amino-acid biosynthesis; L-histidine biosynthesis; L-histidine from 5-phospho-alpha-D-ribose 1-diphosphate: step 3/9. Functionally, catalyzes the hydrolysis of the adenine ring of phosphoribosyl-AMP. The protein is Phosphoribosyl-AMP cyclohydrolase of Bacillus cereus (strain AH820).